The following is an 89-amino-acid chain: MRSLTLAAVLACSLLLVFHTSAAEEHEAQEGYLMNPGDTDTALATVDDERILECVFSCDIEKEGKPCKPKGEKKCTGGWKCKIKLCLKI.

An N-terminal signal peptide occupies residues 1-23; the sequence is MRSLTLAAVLACSLLLVFHTSAA. The propeptide occupies 24–50; the sequence is EEHEAQEGYLMNPGDTDTALATVDDER. 3 disulfides stabilise this stretch: cysteine 54–cysteine 75, cysteine 58–cysteine 81, and cysteine 67–cysteine 86.

The protein belongs to the neurotoxin 12 (Hwtx-2) family. 06 (TXP1) subfamily. As to expression, expressed by the venom gland.

It is found in the secreted. Functionally, inhibits voltage-gated calcium channels (Cav) in rat cerebellar granule cells. Has insecticidal activity. The sequence is that of Omega-theraphotoxin-Ba1c from Brachypelma albiceps (Mexican golden redrump tarantula).